The primary structure comprises 141 residues: Hemoglobin subunit alpha-D (141 aa).

A Globin domain is found at 1–141; it reads MLGAEETALV…VAAVLAEKYR (141 aa). Positions 58 and 87 each coordinate heme b.

This sequence belongs to the globin family. As to quaternary structure, heterotetramer of two alpha-D chains and two beta chains. Red blood cells.

Functionally, involved in oxygen transport from the lung to the various peripheral tissues. In Phalacrocorax carbo (Great cormorant), this protein is Hemoglobin subunit alpha-D (HBAD).